The following is a 208-amino-acid chain: FMN-dependent NADH:quinone oxidoreductase 1 (208 aa).

Residues S10, 15-17 (SES), and 97-100 (MWNF) each bind FMN.

Belongs to the azoreductase type 1 family. Homodimer. FMN serves as cofactor.

It catalyses the reaction 2 a quinone + NADH + H(+) = 2 a 1,4-benzosemiquinone + NAD(+). The catalysed reaction is N,N-dimethyl-1,4-phenylenediamine + anthranilate + 2 NAD(+) = 2-(4-dimethylaminophenyl)diazenylbenzoate + 2 NADH + 2 H(+). Quinone reductase that provides resistance to thiol-specific stress caused by electrophilic quinones. Its function is as follows. Also exhibits azoreductase activity. Catalyzes the reductive cleavage of the azo bond in aromatic azo compounds to the corresponding amines. This is FMN-dependent NADH:quinone oxidoreductase 1 from Bradyrhizobium diazoefficiens (strain JCM 10833 / BCRC 13528 / IAM 13628 / NBRC 14792 / USDA 110).